The primary structure comprises 418 residues: Glutamyl-tRNA reductase (418 aa).

Substrate-binding positions include 49-52 (TCNR), S107, 112-114 (EPQ), and Q118. C50 acts as the Nucleophile in catalysis. Residue 187 to 192 (GAGETI) coordinates NADP(+).

It belongs to the glutamyl-tRNA reductase family. In terms of assembly, homodimer.

The enzyme catalyses (S)-4-amino-5-oxopentanoate + tRNA(Glu) + NADP(+) = L-glutamyl-tRNA(Glu) + NADPH + H(+). It functions in the pathway porphyrin-containing compound metabolism; protoporphyrin-IX biosynthesis; 5-aminolevulinate from L-glutamyl-tRNA(Glu): step 1/2. In terms of biological role, catalyzes the NADPH-dependent reduction of glutamyl-tRNA(Glu) to glutamate 1-semialdehyde (GSA). This is Glutamyl-tRNA reductase from Pseudoalteromonas translucida (strain TAC 125).